Reading from the N-terminus, the 347-residue chain is MRIEEDLKLGFKEVLIRPKRSTLKSRSDVELERQFTFKHSGQSWSGVPIIAANMDTVGTFSMASALASFDILTAVHKHYSVEEWQAFINNSSADVLKHVMVSTGTSDADFEKTKQILDLNPALNFVCIDVANGYSEHFVQFVAKAREAWPTKTICAGNVVTGEMCEELILSGADIVKVGIGPGSVCTTRVKTGVGYPQLSAVIECADAAHGLGGMIVSDGGCTTPGDVAKAFGGGADFVMLGGMLAGHEESGGRIVEENGEKFMLFYGMSSESAMKRHVGGVAEYRAAEGKTVKLPLRGPVENTARDILGGLRSACTYVGASRLKELTKRTTFIRVQEQENRIFNNL.

108–131 (ADFEKTKQILDLNPALNFVCIDVA) contributes to the NADP(+) binding site. Residues Gly-181 and Gly-183 each contribute to the K(+) site. Catalysis depends on Cys-186, which acts as the Thioimidate intermediate. NADP(+) is bound at residue 216-239 (IVSDGGCTTPGDVAKAFGGGADFV).

Belongs to the IMPDH/GMPR family. GuaC type 1 subfamily. As to quaternary structure, homotetramer.

It catalyses the reaction IMP + NH4(+) + NADP(+) = GMP + NADPH + 2 H(+). Catalyzes the irreversible NADPH-dependent deamination of GMP to IMP. It functions in the conversion of nucleobase, nucleoside and nucleotide derivatives of G to A nucleotides, and in maintaining the intracellular balance of A and G nucleotides. This chain is GMP reductase, found in Shigella dysenteriae serotype 1 (strain Sd197).